The primary structure comprises 661 residues: Transketolase (661 aa).

Substrate is bound at residue His28. Thiamine diphosphate-binding positions include His68 and 116 to 118 (GPL). A Mg(2+)-binding site is contributed by Glu157. Residues Gly158 and Asn187 each coordinate thiamine diphosphate. Asn187 and Ile189 together coordinate Mg(2+). 2 residues coordinate substrate: His261 and Arg358. His261 lines the thiamine diphosphate pocket. Catalysis depends on Glu412, which acts as the Proton donor. Phe438 serves as a coordination point for thiamine diphosphate. His462, Asp470, and Arg521 together coordinate substrate.

It belongs to the transketolase family. In terms of assembly, homodimer. It depends on Mg(2+) as a cofactor. Ca(2+) is required as a cofactor. Mn(2+) serves as cofactor. Requires Co(2+) as cofactor. The cofactor is thiamine diphosphate.

It catalyses the reaction D-sedoheptulose 7-phosphate + D-glyceraldehyde 3-phosphate = aldehydo-D-ribose 5-phosphate + D-xylulose 5-phosphate. Its function is as follows. Catalyzes the transfer of a two-carbon ketol group from a ketose donor to an aldose acceptor, via a covalent intermediate with the cofactor thiamine pyrophosphate. This chain is Transketolase (tkt), found in Treponema pallidum (strain Nichols).